The primary structure comprises 265 residues: 3-methyl-2-oxobutanoate hydroxymethyltransferase (265 aa).

Residues Asp43 and Asp82 each contribute to the Mg(2+) site. 3-methyl-2-oxobutanoate contacts are provided by residues 43–44 (DS), Asp82, and Lys111. Glu113 contacts Mg(2+). Glu180 serves as the catalytic Proton acceptor.

The protein belongs to the PanB family. In terms of assembly, homodecamer; pentamer of dimers. Requires Mg(2+) as cofactor.

Its subcellular location is the cytoplasm. The catalysed reaction is 3-methyl-2-oxobutanoate + (6R)-5,10-methylene-5,6,7,8-tetrahydrofolate + H2O = 2-dehydropantoate + (6S)-5,6,7,8-tetrahydrofolate. It participates in cofactor biosynthesis; (R)-pantothenate biosynthesis; (R)-pantoate from 3-methyl-2-oxobutanoate: step 1/2. Catalyzes the reversible reaction in which hydroxymethyl group from 5,10-methylenetetrahydrofolate is transferred onto alpha-ketoisovalerate to form ketopantoate. This chain is 3-methyl-2-oxobutanoate hydroxymethyltransferase, found in Francisella tularensis subsp. holarctica (strain OSU18).